Reading from the N-terminus, the 51-residue chain is Large ribosomal subunit protein eL39 (51 aa).

It belongs to the eukaryotic ribosomal protein eL39 family.

This Methanosarcina barkeri (strain Fusaro / DSM 804) protein is Large ribosomal subunit protein eL39.